The sequence spans 261 residues: CD40 ligand (261 aa).

Topologically, residues 1–22 (MIETYSQPSPRSVATGPPVSMK) are cytoplasmic. Residues 23–46 (IFMYLLTVFLITQMIGSALFAVYL) traverse the membrane as a helical; Signal-anchor for type II membrane protein segment. Residues 47–261 (HRRLDKIEDE…GFTSFGLLKL (215 aa)) lie on the Extracellular side of the membrane. The THD domain occupies 122–261 (IAAHVISEAS…GFTSFGLLKL (140 aa)). Cys178 and Cys218 are joined by a disulfide. A glycan (N-linked (GlcNAc...) asparagine) is linked at Asn240.

This sequence belongs to the tumor necrosis factor family. In terms of assembly, homotrimer. Interacts with CD28. CD40 ligand, soluble form: Exists as either a monomer or a homotrimer. Forms a ternary complex between CD40 and integrins for CD40-CD40LG signaling. In terms of processing, the soluble form derives from the membrane form by proteolytic processing.

The protein resides in the cell membrane. It localises to the cell surface. The protein localises to the secreted. In terms of biological role, cytokine that acts as a ligand to CD40/TNFRSF5. Costimulates T-cell proliferation and cytokine production. Its cross-linking on T-cells generates a costimulatory signal which enhances the production of IL4 and IL10 in conjunction with the TCR/CD3 ligation and CD28 costimulation. Induces the activation of NF-kappa-B. Induces the activation of kinases MAPK8 and PAK2 in T-cells. Mediates B-cell proliferation in the absence of co-stimulus as well as IgE production in the presence of IL4. Involved in immunoglobulin class switching. Its function is as follows. Acts as a ligand for integrins, specifically ITGA5:ITGB1 and ITGAV:ITGB3; both integrins and the CD40 receptor are required for activation of CD40-CD40LG signaling, which have cell-type dependent effects, such as B-cell activation, NF-kappa-B signaling and anti-apoptotic signaling. The polypeptide is CD40 ligand (CD40LG) (Bos taurus (Bovine)).